A 216-amino-acid polypeptide reads, in one-letter code: Ribosome maturation factor RimP (216 aa).

This sequence belongs to the RimP family.

It is found in the cytoplasm. In terms of biological role, required for maturation of 30S ribosomal subunits. In Bartonella quintana (strain Toulouse) (Rochalimaea quintana), this protein is Ribosome maturation factor RimP.